The following is a 148-amino-acid chain: Probable histone H2A.1 (148 aa).

Residues 1 to 23 (MDASTKTKKGAGGRKGGPRKKSV) show a composition bias toward basic residues. 2 disordered regions span residues 1–28 (MDAS…RSTR) and 127–148 (KNEK…PKKA). Residues 131 to 142 (AATTTKSPSKAT) are compositionally biased toward low complexity. 2 short sequence motifs (SPKK motif) span residues 137–140 (SPSK) and 144–147 (SPKK).

This sequence belongs to the histone H2A family. As to quaternary structure, the nucleosome is a histone octamer containing two molecules each of H2A, H2B, H3 and H4 assembled in one H3-H4 heterotetramer and two H2A-H2B heterodimers. The octamer wraps approximately 147 bp of DNA.

The protein localises to the nucleus. The protein resides in the chromosome. Core component of nucleosome. Nucleosomes wrap and compact DNA into chromatin, limiting DNA accessibility to the cellular machineries which require DNA as a template. Histones thereby play a central role in transcription regulation, DNA repair, DNA replication and chromosomal stability. DNA accessibility is regulated via a complex set of post-translational modifications of histones, also called histone code, and nucleosome remodeling. In Medicago truncatula (Barrel medic), this protein is Probable histone H2A.1.